The sequence spans 420 residues: uncharacterized protein (420 aa).

The region spanning 43-215 (NLCLVLDHSG…HTFRQLFQRM (173 aa)) is the VWFA domain. The tract at residues 389-420 (LQSGEDLSEGDRKKTRMVSKTTLQPPSAPSEH) is disordered.

This is an uncharacterized protein from Synechocystis sp. (strain ATCC 27184 / PCC 6803 / Kazusa).